The primary structure comprises 568 residues: Urease subunit alpha (568 aa).

The Urease domain occupies 130–568 (GGIDSHIHFI…LPMAQRYFLF (439 aa)). Ni(2+) contacts are provided by histidine 135, histidine 137, and lysine 218. Lysine 218 bears the N6-carboxylysine mark. Histidine 220 contacts substrate. Ni(2+) is bound by residues histidine 247 and histidine 273. Histidine 321 functions as the Proton donor in the catalytic mechanism. Ni(2+) is bound at residue aspartate 361.

Belongs to the metallo-dependent hydrolases superfamily. Urease alpha subunit family. In terms of assembly, heterotrimer of UreA (gamma), UreB (beta) and UreC (alpha) subunits. Three heterotrimers associate to form the active enzyme. Ni cation serves as cofactor. Post-translationally, carboxylation allows a single lysine to coordinate two nickel ions.

Its subcellular location is the cytoplasm. The enzyme catalyses urea + 2 H2O + H(+) = hydrogencarbonate + 2 NH4(+). It participates in nitrogen metabolism; urea degradation; CO(2) and NH(3) from urea (urease route): step 1/1. This chain is Urease subunit alpha, found in Nitrosospira multiformis (strain ATCC 25196 / NCIMB 11849 / C 71).